The primary structure comprises 704 residues: DNA-directed DNA polymerase (704 aa).

Residues 1–187 (MIVSDIEANA…TKALLEKLLS (187 aa)) are 3'-5'exonuclease. The Mg(2+) site is built by aspartate 5, glutamate 7, and aspartate 174. Residues 202-704 (GYTTFWSESL…KMGPNWAICH (503 aa)) form a polymerase region. The interval 262–338 (GSWYQPKGGT…VEHVVFNPSS (77 aa)) is binding to host TrxA. Residues aspartate 475 and alanine 476 each coordinate Mg(2+). Substrate is bound by residues histidine 506, arginine 518, lysine 522, and tyrosine 526. Residue aspartate 654 participates in Mg(2+) binding.

It belongs to the DNA polymerase type-A family. As to quaternary structure, composed of two subunits. One is encoded by the phage and the other is encoded by the host thioredoxin. Interacts with DNA primase/helicase; this interaction is essential for the coordination of DNA unwinding and nucleotide polymerization on duplex DNA. Interacts with the ssDNA-binding protein. Part of the replicase complex that includes the DNA polymerase, thioredoxin, the primase/helicase and the single-stranded DNA binding protein. The cofactor is Mg(2+).

The catalysed reaction is DNA(n) + a 2'-deoxyribonucleoside 5'-triphosphate = DNA(n+1) + diphosphate. Its function is as follows. Replicates viral genomic DNA. This polymerase possesses two enzymatic activities: DNA synthesis (polymerase) and an exonucleolytic activity that degrades single-stranded DNA in the 3'-5' direction. Non-processive DNA polymerase that achieves processivity by binding to host thioredoxin (TrxA). This interaction increases the rate of dNTP incorporation to yield a processivity of approximately 800 nucleotides (nt) per binding event. Interacts with DNA helicase gp4 to coordinate nucleotide polymerization with unwinding of the DNA. The leading strand is synthesized continuously while synthesis of the lagging strand requires the synthesis of oligoribonucleotides by the primase domain of gp4. The protein is DNA-directed DNA polymerase of Escherichia phage T7 (Bacteriophage T7).